Reading from the N-terminus, the 525-residue chain is Peptide chain release factor 3 (525 aa).

A tr-type G domain is found at 9 to 276 (AKRRTFAIIS…GFTRYAPAPQ (268 aa)). Residues 18–25 (SHPDAGKT), 86–90 (DTPGH), and 140–143 (NKFD) contribute to the GTP site.

This sequence belongs to the TRAFAC class translation factor GTPase superfamily. Classic translation factor GTPase family. PrfC subfamily.

It localises to the cytoplasm. Its function is as follows. Increases the formation of ribosomal termination complexes and stimulates activities of RF-1 and RF-2. It binds guanine nucleotides and has strong preference for UGA stop codons. It may interact directly with the ribosome. The stimulation of RF-1 and RF-2 is significantly reduced by GTP and GDP, but not by GMP. In Francisella tularensis subsp. mediasiatica (strain FSC147), this protein is Peptide chain release factor 3.